The following is a 79-amino-acid chain: Serine protease inhibitor Kazal-type 1 (79 aa).

The first 18 residues, 1–18 (MKVAIIFLLSALALLSLA), serve as a signal peptide directing secretion. The region spanning 26-79 (NGKTPNCPKQIMGCPRIYDPVCGTNGITYPSECSLCFENRKFGTSIHIQRRGTC) is the Kazal-like domain. Disulfide bonds link Cys32/Cys61, Cys39/Cys58, and Cys47/Cys79.

Its subcellular location is the secreted. Functionally, serine protease inhibitor which exhibits anti-trypsin activity. In the pancreas, protects against trypsin-catalyzed premature activation of zymogens. Its function is as follows. In the male reproductive tract, binds to sperm heads where it modulates sperm capacitance by inhibiting calcium uptake and nitrogen oxide (NO) production. The chain is Serine protease inhibitor Kazal-type 1 from Rattus norvegicus (Rat).